A 382-amino-acid polypeptide reads, in one-letter code: Threonine synthase (382 aa).

Lys93 carries the post-translational modification N6-(pyridoxal phosphate)lysine. Pyridoxal 5'-phosphate is bound by residues Asn119, 219–223 (GNAGN), and Thr347.

This sequence belongs to the threonine synthase family. The cofactor is pyridoxal 5'-phosphate.

The catalysed reaction is O-phospho-L-homoserine + H2O = L-threonine + phosphate. It functions in the pathway amino-acid biosynthesis; L-threonine biosynthesis; L-threonine from L-aspartate: step 5/5. Catalyzes the gamma-elimination of phosphate from L-phosphohomoserine and the beta-addition of water to produce L-threonine. This chain is Threonine synthase (thrC), found in Synechocystis sp. (strain ATCC 27184 / PCC 6803 / Kazusa).